An 88-amino-acid polypeptide reads, in one-letter code: Small ribosomal subunit protein bS20 (88 aa).

The segment at 1 to 27 (MANTPQAKKRARQNEKARKHNASMRSM) is disordered. Residues 7 to 22 (AKKRARQNEKARKHNA) are compositionally biased toward basic residues.

The protein belongs to the bacterial ribosomal protein bS20 family.

Its function is as follows. Binds directly to 16S ribosomal RNA. The protein is Small ribosomal subunit protein bS20 of Cellvibrio japonicus (strain Ueda107) (Pseudomonas fluorescens subsp. cellulosa).